Consider the following 350-residue polypeptide: Biotin synthase (350 aa).

The Radical SAM core domain maps to 38 to 256; that stretch reads NYVQVSTLLS…IAVARIMMPT (219 aa). [4Fe-4S] cluster-binding residues include cysteine 53, cysteine 57, and cysteine 60. Residues cysteine 97, cysteine 128, cysteine 188, and arginine 260 each coordinate [2Fe-2S] cluster.

This sequence belongs to the radical SAM superfamily. Biotin synthase family. Homodimer. [4Fe-4S] cluster is required as a cofactor. [2Fe-2S] cluster serves as cofactor.

It catalyses the reaction (4R,5S)-dethiobiotin + (sulfur carrier)-SH + 2 reduced [2Fe-2S]-[ferredoxin] + 2 S-adenosyl-L-methionine = (sulfur carrier)-H + biotin + 2 5'-deoxyadenosine + 2 L-methionine + 2 oxidized [2Fe-2S]-[ferredoxin]. It functions in the pathway cofactor biosynthesis; biotin biosynthesis; biotin from 7,8-diaminononanoate: step 2/2. Its function is as follows. Catalyzes the conversion of dethiobiotin (DTB) to biotin by the insertion of a sulfur atom into dethiobiotin via a radical-based mechanism. This is Biotin synthase from Vibrio vulnificus (strain CMCP6).